Here is a 186-residue protein sequence, read N- to C-terminus: Ribosome-recycling factor (186 aa).

This sequence belongs to the RRF family.

Its subcellular location is the cytoplasm. Its function is as follows. Responsible for the release of ribosomes from messenger RNA at the termination of protein biosynthesis. May increase the efficiency of translation by recycling ribosomes from one round of translation to another. The sequence is that of Ribosome-recycling factor from Nitratiruptor sp. (strain SB155-2).